A 255-amino-acid polypeptide reads, in one-letter code: Acetylglutamate kinase (255 aa).

Substrate contacts are provided by residues glycine 40–glycine 41, arginine 62, and asparagine 153.

It belongs to the acetylglutamate kinase family. ArgB subfamily.

The protein resides in the cytoplasm. The catalysed reaction is N-acetyl-L-glutamate + ATP = N-acetyl-L-glutamyl 5-phosphate + ADP. The protein operates within amino-acid biosynthesis; L-arginine biosynthesis; N(2)-acetyl-L-ornithine from L-glutamate: step 2/4. In terms of biological role, catalyzes the ATP-dependent phosphorylation of N-acetyl-L-glutamate. The protein is Acetylglutamate kinase of Bacillus thuringiensis subsp. konkukian (strain 97-27).